The chain runs to 39 residues: ALQDDWQQSHLERRQVLAESQKQIQATIGALXXERQXXA.

It belongs to the gas vesicle GvpC family.

The protein localises to the gas vesicle. Its function is as follows. Confers stability, involved in shaping gas vesicles, hollow, gas filled proteinaceous nanostructures. During planktonic growth they allow positioning of the organism at a favorable depth for light or nutrient acquisition. The polypeptide is Gas vesicle protein C (Spirulina sp. (strain CCAP 1475/10)).